The following is a 472-amino-acid chain: Aspartyl/glutamyl-tRNA(Asn/Gln) amidotransferase subunit B (472 aa).

Belongs to the GatB/GatE family. GatB subfamily. In terms of assembly, heterotrimer of A, B and C subunits.

It catalyses the reaction L-glutamyl-tRNA(Gln) + L-glutamine + ATP + H2O = L-glutaminyl-tRNA(Gln) + L-glutamate + ADP + phosphate + H(+). The catalysed reaction is L-aspartyl-tRNA(Asn) + L-glutamine + ATP + H2O = L-asparaginyl-tRNA(Asn) + L-glutamate + ADP + phosphate + 2 H(+). In terms of biological role, allows the formation of correctly charged Asn-tRNA(Asn) or Gln-tRNA(Gln) through the transamidation of misacylated Asp-tRNA(Asn) or Glu-tRNA(Gln) in organisms which lack either or both of asparaginyl-tRNA or glutaminyl-tRNA synthetases. The reaction takes place in the presence of glutamine and ATP through an activated phospho-Asp-tRNA(Asn) or phospho-Glu-tRNA(Gln). This Campylobacter jejuni subsp. jejuni serotype O:23/36 (strain 81-176) protein is Aspartyl/glutamyl-tRNA(Asn/Gln) amidotransferase subunit B.